Consider the following 298-residue polypeptide: tRNA dimethylallyltransferase 2 (298 aa).

10–17 (GPTASGKT) is an ATP binding site. A substrate-binding site is contributed by 12–17 (TASGKT). Positions 35 to 38 (DSRQ) are interaction with substrate tRNA.

It belongs to the IPP transferase family. In terms of assembly, monomer. Mg(2+) is required as a cofactor.

It carries out the reaction adenosine(37) in tRNA + dimethylallyl diphosphate = N(6)-dimethylallyladenosine(37) in tRNA + diphosphate. In terms of biological role, catalyzes the transfer of a dimethylallyl group onto the adenine at position 37 in tRNAs that read codons beginning with uridine, leading to the formation of N6-(dimethylallyl)adenosine (i(6)A). The polypeptide is tRNA dimethylallyltransferase 2 (Syntrophotalea carbinolica (strain DSM 2380 / NBRC 103641 / GraBd1) (Pelobacter carbinolicus)).